Reading from the N-terminus, the 175-residue chain is Ribosome maturation factor RimM (175 aa).

A PRC barrel domain is found at 100–173 (EGEYYFHEII…TIIIRPMEGL (74 aa)).

It belongs to the RimM family. In terms of assembly, binds ribosomal protein uS19.

Its subcellular location is the cytoplasm. An accessory protein needed during the final step in the assembly of 30S ribosomal subunit, possibly for assembly of the head region. Essential for efficient processing of 16S rRNA. May be needed both before and after RbfA during the maturation of 16S rRNA. It has affinity for free ribosomal 30S subunits but not for 70S ribosomes. The protein is Ribosome maturation factor RimM of Geobacillus kaustophilus (strain HTA426).